A 136-amino-acid polypeptide reads, in one-letter code: ATP synthase epsilon chain (136 aa).

Belongs to the ATPase epsilon chain family. F-type ATPases have 2 components, CF(1) - the catalytic core - and CF(0) - the membrane proton channel. CF(1) has five subunits: alpha(3), beta(3), gamma(1), delta(1), epsilon(1). CF(0) has three main subunits: a, b and c.

The protein resides in the cell membrane. Produces ATP from ADP in the presence of a proton gradient across the membrane. This Herpetosiphon aurantiacus (strain ATCC 23779 / DSM 785 / 114-95) protein is ATP synthase epsilon chain.